The chain runs to 225 residues: Urease accessory protein UreF (225 aa).

This sequence belongs to the UreF family. As to quaternary structure, ureD, UreF and UreG form a complex that acts as a GTP-hydrolysis-dependent molecular chaperone, activating the urease apoprotein by helping to assemble the nickel containing metallocenter of UreC. The UreE protein probably delivers the nickel.

It localises to the cytoplasm. Its function is as follows. Required for maturation of urease via the functional incorporation of the urease nickel metallocenter. In Arthrobacter sp. (strain FB24), this protein is Urease accessory protein UreF.